Reading from the N-terminus, the 303-residue chain is 1D-myo-inositol 2-acetamido-2-deoxy-alpha-D-glucopyranoside deacetylase 1 (303 aa).

Residues H15, D18, and H157 each contribute to the Zn(2+) site.

This sequence belongs to the MshB deacetylase family. The cofactor is Zn(2+).

It carries out the reaction 1D-myo-inositol 2-acetamido-2-deoxy-alpha-D-glucopyranoside + H2O = 1D-myo-inositol 2-amino-2-deoxy-alpha-D-glucopyranoside + acetate. Catalyzes the deacetylation of 1D-myo-inositol 2-acetamido-2-deoxy-alpha-D-glucopyranoside (GlcNAc-Ins) in the mycothiol biosynthesis pathway. The protein is 1D-myo-inositol 2-acetamido-2-deoxy-alpha-D-glucopyranoside deacetylase 1 of Saccharopolyspora erythraea (strain ATCC 11635 / DSM 40517 / JCM 4748 / NBRC 13426 / NCIMB 8594 / NRRL 2338).